The chain runs to 284 residues: MTPAVTQTILTVRIARPHGYGYVLLSRGFSALNRPPPNYPGHIPLTTFERGALAVGSAIGSLLNPRRGDLIAALGEATATPYFIYRLRDAMLSDPTGRRILRDRPRISSKTLSIEYLRSLPPNTVGRTYVGWLDREGVGPDTRAPVQYIDDEECAYVMQRYRECHDFYHAITGLPVVVEGEVALKTFEFANTLLPMTGLSMFAVMRLKPAERERFWKLHLPWAIRSGLASKEVINVYWEEQLERDANELREELGIEKPADLREIRKMMRRQKAAEEAAKAKDGQ.

4 residues coordinate Zn(2+): His-165, Asp-166, His-169, and Glu-181.

It belongs to the COQ4 family. As to quaternary structure, component of a multi-subunit COQ enzyme complex, composed of at least COQ3, COQ4, COQ5, COQ6, COQ7 and COQ9. Zn(2+) serves as cofactor.

Its subcellular location is the mitochondrion inner membrane. It catalyses the reaction a 4-hydroxy-3-methoxy-5-(all-trans-polyprenyl)benzoate + H(+) = a 2-methoxy-6-(all-trans-polyprenyl)phenol + CO2. The protein operates within cofactor biosynthesis; ubiquinone biosynthesis. Functionally, lyase that catalyzes the C1-decarboxylation of 4-hydroxy-3-methoxy-5-(all-trans-polyprenyl)benzoic acid into 2-methoxy-6-(all-trans-polyprenyl)phenol during ubiquinone biosynthesis. The polypeptide is Ubiquinone biosynthesis protein COQ4, mitochondrial (Blastomyces gilchristii (strain SLH14081) (Blastomyces dermatitidis)).